The following is a 228-amino-acid chain: UPF0758 protein NT01CX_1687 (228 aa).

Residues 106–228 (IIKSPGDVAG…YISLKEKNIL (123 aa)) enclose the MPN domain. His177, His179, and Asp190 together coordinate Zn(2+). The JAMM motif signature appears at 177–190 (HNHPSGDPTPSSED).

The protein belongs to the UPF0758 family.

This chain is UPF0758 protein NT01CX_1687, found in Clostridium novyi (strain NT).